We begin with the raw amino-acid sequence, 418 residues long: RuvB-like helicase 2 (418 aa).

65 to 72 (GDRGSGKT) is an ATP binding site.

Belongs to the RuvB family. Component of the SWR1 chromatin remodeling complex, the INO80 chromatin remodeling complex, and of the R2TP complex.

Its subcellular location is the nucleus. The enzyme catalyses ATP + H2O = ADP + phosphate + H(+). DNA helicase which participates in several chromatin remodeling complexes, including the SWR1 and the INO80 complexes. The SWR1 complex mediates the ATP-dependent exchange of histone H2A for the H2A variant HZT1 leading to transcriptional regulation of selected genes by chromatin remodeling. The INO80 complex remodels chromatin by shifting nucleosomes and is involved in DNA repair. Also involved in pre-rRNA processing. The sequence is that of RuvB-like helicase 2 (RVB2) from Encephalitozoon cuniculi (strain GB-M1) (Microsporidian parasite).